Consider the following 376-residue polypeptide: Chaperone protein DnaJ (376 aa).

Residues 5–70 enclose the J domain; that stretch reads DYYEVLGLSK…QKKANYDQFG (66 aa). Residues 133 to 215 form a CR-type zinc finger; sequence GVEKEISITR…CHGKGTVRKN (83 aa). Residues C146, C149, C163, C166, C189, C192, C203, and C206 each contribute to the Zn(2+) site. CXXCXGXG motif repeat units follow at residues 146–153, 163–170, 189–196, and 203–210; these read CDTCAGSG, CDKCGGTG, CDKCGGSG, and CTTCHGKG.

It belongs to the DnaJ family. In terms of assembly, homodimer. It depends on Zn(2+) as a cofactor.

The protein resides in the cytoplasm. Its function is as follows. Participates actively in the response to hyperosmotic and heat shock by preventing the aggregation of stress-denatured proteins and by disaggregating proteins, also in an autonomous, DnaK-independent fashion. Unfolded proteins bind initially to DnaJ; upon interaction with the DnaJ-bound protein, DnaK hydrolyzes its bound ATP, resulting in the formation of a stable complex. GrpE releases ADP from DnaK; ATP binding to DnaK triggers the release of the substrate protein, thus completing the reaction cycle. Several rounds of ATP-dependent interactions between DnaJ, DnaK and GrpE are required for fully efficient folding. Also involved, together with DnaK and GrpE, in the DNA replication of plasmids through activation of initiation proteins. This chain is Chaperone protein DnaJ, found in Clostridium novyi (strain NT).